Consider the following 1040-residue polypeptide: MTTKLSSFCFLTHGLAGISCEREHGSSRRFFYLPSRRLVSTSCKMRQQRGFDSSKRQEVKKGSPKPILSINSGLQSNNDEESDLENGSADSVPSLKSDAEKGSSIHGSIDMNHADENLEKKDDIQTTEVTRRKSKTAKKKGESIHATIDIGHDDGKNLDNITVPEVAKALSLNKSEGEQISDGQFGELMTMIRSAEKNILRLDEARATALDDLNKILSDKEALQGEINVLEMKLSETDERIKTAAQEKAHVELLEEQLEKLRHEMISPIESDGYVLALSKELETLKLENLSLRNDIEMLKSELDSVKDTGERVVVLEKECSGLESSVKDLESKLSVSQEDVSQLSTLKIECTDLWAKVETLQLLLDRATKQAEQAVIVLQQNQDLRNKVDKIEESLKEANVYKESSEKIQQYNELMQHKVTLLEERLEKSDAEIFSYVQLYQESIKEFQETLESLKEESKKKSRDEPVDDMPWDYWSRLLLTVDGWLLEKKIASNDADLLRDMVWKKDRRIHDTYIDVKDKNERDAISAFLKLVSSPTSSGLYVVHIAAEMAPVAKVGGLGDVVAGLGKALQRKGHLVEIILPKYDCMQYDRVRDLRALDTVVESYFDGKLYKNKIWIGTVEGLPVHFIEPQHPSKFFWRGQFYGEQDDFRRFSYFSRAALELLLQSGKKPDIIHCHDWQTAFVAPLYWDLYAPKGLDSARICFTCHNFEYQGTASASELGSCGLDVNQLNRPDRMQDHSSGDRVNPVKGAIIFSNIVTTVSPTYAQEVRTAEGGKGLHSTLNFHSKKFIGILNGIDTDSWNPATDPFLKAQFNAKDLQGKEENKHALRKQLGLSSAESRRPLVGCITRLVPQKGVHLIRHAIYRTLELGGQFVLLGSSPVPHIQREFEGIEQQFKSHDHVRLLLKYDEALSHTIYAASDLFIIPSIFEPCGLTQMIAMRYGSIPIARKTGGLNDSVFDIDDDTIPTQFQNGFTFQTADEQGFNYALERAFNHYKKDEEKWMRLVEKVMSIDFSWGSSATQYEELYTRSVSRARAVPNRT.

Residues 1-42 (MTTKLSSFCFLTHGLAGISCEREHGSSRRFFYLPSRRLVSTS) constitute a chloroplast transit peptide. Positions 43 to 142 (CKMRQQRGFD…KSKTAKKKGE (100 aa)) are disordered. Composition is skewed to basic and acidic residues over residues 52–61 (DSSKRQEVKK) and 112–124 (NHAD…KDDI). A coiled-coil region spans residues 187 to 466 (ELMTMIRSAE…EESKKKSRDE (280 aa)). 3 residues coordinate ADP: Lys556, Gly559, and Asp562. Residues Trp679 and Gln680 each contribute to the (1,4-alpha-D-glucosyl)n site. ADP is bound by residues Arg849, Lys854, Lys906, Asp908, Tyr916, Leu933, and Thr934.

It belongs to the glycosyltransferase 1 family. Bacterial/plant glycogen synthase subfamily. In terms of assembly, interacts with PTST2. Interacts with PII1; the interaction is essential for the initiation of starch granules biosynthesis in leaf chloroplasts. In terms of tissue distribution, expressed in leaves and flowers.

It localises to the plastid. The protein resides in the chloroplast. Its subcellular location is the amyloplast. The protein localises to the chloroplast stroma. It catalyses the reaction [(1-&gt;4)-alpha-D-glucosyl](n) + ADP-alpha-D-glucose = [(1-&gt;4)-alpha-D-glucosyl](n+1) + ADP + H(+). The protein operates within glycan biosynthesis; starch biosynthesis. Probably involved in the priming of starch granule formation. May play a regulatory role in the control of starch accumulation in plastids. Is necessary and sufficient to establish the correct number of starch granules observed in chloroplasts. This chain is Probable starch synthase 4, chloroplastic/amyloplastic, found in Arabidopsis thaliana (Mouse-ear cress).